We begin with the raw amino-acid sequence, 253 residues long: Ditrans,polycis-undecaprenyl-diphosphate synthase ((2E,6E)-farnesyl-diphosphate specific) (253 aa).

Asp26 is an active-site residue. Mg(2+) is bound at residue Asp26. Substrate is bound by residues 27–30 (GNGR), Trp31, Arg39, His43, and 71–73 (SSE). The Proton acceptor role is filled by Asn74. Substrate is bound by residues Trp75, Arg77, and Arg194. Residue His199 participates in Mg(2+) binding. 200–202 (RIS) lines the substrate pocket. Glu213 lines the Mg(2+) pocket.

Belongs to the UPP synthase family. Homodimer. It depends on Mg(2+) as a cofactor.

The catalysed reaction is 8 isopentenyl diphosphate + (2E,6E)-farnesyl diphosphate = di-trans,octa-cis-undecaprenyl diphosphate + 8 diphosphate. Catalyzes the sequential condensation of isopentenyl diphosphate (IPP) with (2E,6E)-farnesyl diphosphate (E,E-FPP) to yield (2Z,6Z,10Z,14Z,18Z,22Z,26Z,30Z,34E,38E)-undecaprenyl diphosphate (di-trans,octa-cis-UPP). UPP is the precursor of glycosyl carrier lipid in the biosynthesis of bacterial cell wall polysaccharide components such as peptidoglycan and lipopolysaccharide. This chain is Ditrans,polycis-undecaprenyl-diphosphate synthase ((2E,6E)-farnesyl-diphosphate specific), found in Shigella flexneri.